A 507-amino-acid polypeptide reads, in one-letter code: Histidine ammonia-lyase (507 aa).

The segment at residues 142-144 (ASG) is a cross-link (5-imidazolinone (Ala-Gly)). Ser-143 is subject to 2,3-didehydroalanine (Ser).

It belongs to the PAL/histidase family. Contains an active site 4-methylidene-imidazol-5-one (MIO), which is formed autocatalytically by cyclization and dehydration of residues Ala-Ser-Gly.

Its subcellular location is the cytoplasm. The enzyme catalyses L-histidine = trans-urocanate + NH4(+). The protein operates within amino-acid degradation; L-histidine degradation into L-glutamate; N-formimidoyl-L-glutamate from L-histidine: step 1/3. In Maricaulis maris (strain MCS10) (Caulobacter maris), this protein is Histidine ammonia-lyase.